We begin with the raw amino-acid sequence, 149 residues long: Large ribosomal subunit protein uL13 (149 aa).

The protein belongs to the universal ribosomal protein uL13 family. In terms of assembly, part of the 50S ribosomal subunit.

This protein is one of the early assembly proteins of the 50S ribosomal subunit, although it is not seen to bind rRNA by itself. It is important during the early stages of 50S assembly. The protein is Large ribosomal subunit protein uL13 of Bifidobacterium adolescentis (strain ATCC 15703 / DSM 20083 / NCTC 11814 / E194a).